A 173-amino-acid polypeptide reads, in one-letter code: dCTP deaminase, dUMP-forming (173 aa).

Residues 93-98, aspartate 111, 119-121, glutamine 138, and tyrosine 151 contribute to the dCTP site; these read RSSIGR and TLE. Glutamate 121 (proton donor/acceptor) is an active-site residue.

The protein belongs to the dCTP deaminase family. As to quaternary structure, homotrimer.

It catalyses the reaction dCTP + 2 H2O = dUMP + NH4(+) + diphosphate. The protein operates within pyrimidine metabolism; dUMP biosynthesis; dUMP from dCTP: step 1/1. Its function is as follows. Bifunctional enzyme that catalyzes both the deamination of dCTP to dUTP and the hydrolysis of dUTP to dUMP without releasing the toxic dUTP intermediate. This chain is dCTP deaminase, dUMP-forming, found in Cytophaga hutchinsonii (strain ATCC 33406 / DSM 1761 / CIP 103989 / NBRC 15051 / NCIMB 9469 / D465).